We begin with the raw amino-acid sequence, 358 residues long: RuBisCO accumulation factor 1 (358 aa).

Residues 11–194 (VSAAEAAELI…RQAIEKLLTD (184 aa)) are N-terminal alpha-helix. Positions 218-344 (ARLIPVAGTF…VVLVLRPKKI (127 aa)) are C-terminal beta-sheet.

It belongs to the RAF family. In terms of assembly, homodimer. Forms an RbcL(8)-Raf1(8) complex. Forms complexes of many stoichiometries with RbcL with and without RbcS. RbcX and Raf1 can bind simultaneously to RbcL. Interacts with both RuBisCO subunits (ccbL, ccbS), GroEL, DnaK and alpha and beta phycocyanin (cpcA, cpcB) in pull-down experiments with tagged protein. C-terminally tagged Raf1 does not interact with either RuBisCO subunit, suggesting its C-terminus is involved in binding.

The protein resides in the cytoplasm. In terms of biological role, a major RuBisCO chaperone. Acts after GroEL-GroES chaperonin to fold and/or assemble the large subunit of RuBisCO (ccbL, rbcL). Cooperates with RbcX in RbcL folding, plays the major role in assembly of dimers into RbcL(8)-Raf1(8) intermediate complexes. RbcS replaces Raf1, leading to holoenzyme formation. Required for optimal reconstitution of RbcL(8) upon expression in E.coli. Has been suggested to be involved in RuBisCO recycling and homeostasis rather than assembly. The sequence is that of RuBisCO accumulation factor 1 from Synechocystis sp. (strain ATCC 27184 / PCC 6803 / Kazusa).